Here is a 190-residue protein sequence, read N- to C-terminus: Surfactant protein C (190 aa).

Positions methionine 1–arginine 23 are excised as a propeptide. The S-palmitoyl cysteine moiety is linked to residue cysteine 28. The propeptide occupies histidine 59 to isoleucine 190. The BRICHOS domain maps to phenylalanine 94–isoleucine 190. Cysteine 121 and cysteine 182 are oxidised to a cystine.

The protein localises to the secreted. Its subcellular location is the extracellular space. The protein resides in the surface film. Functionally, pulmonary surfactant associated proteins promote alveolar stability by lowering the surface tension at the air-liquid interface in the peripheral air spaces. In Neovison vison (American mink), this protein is Surfactant protein C (SFTPC).